The primary structure comprises 124 residues: Acidic phospholipase A2 A (124 aa).

Disulfide bonds link cysteine 26-cysteine 116, cysteine 28-cysteine 44, cysteine 43-cysteine 95, cysteine 49-cysteine 124, cysteine 50-cysteine 88, cysteine 57-cysteine 81, and cysteine 75-cysteine 86. Residues tyrosine 27, glycine 29, and glycine 31 each contribute to the Ca(2+) site. Residue histidine 47 is part of the active site. Aspartate 48 contacts Ca(2+). Aspartate 89 is a catalytic residue.

This sequence belongs to the phospholipase A2 family. Group II subfamily. D49 sub-subfamily. It depends on Ca(2+) as a cofactor. Expressed by the venom gland.

The protein resides in the secreted. The enzyme catalyses a 1,2-diacyl-sn-glycero-3-phosphocholine + H2O = a 1-acyl-sn-glycero-3-phosphocholine + a fatty acid + H(+). Its function is as follows. PLA2 catalyzes the calcium-dependent hydrolysis of the 2-acyl groups in 3-sn-phosphoglycerides. This Gloydius halys (Chinese water mocassin) protein is Acidic phospholipase A2 A.